The sequence spans 347 residues: GMP reductase (347 aa).

108–131 contacts NADP(+); it reads ADFEKTVQILALNPALNFVCIDVA. K(+) contacts are provided by Gly-181 and Gly-183. The active-site Thioimidate intermediate is the Cys-186. Residue 216-239 coordinates NADP(+); that stretch reads IVSDGGCTMPGDVAKAFGGGADFV.

This sequence belongs to the IMPDH/GMPR family. GuaC type 1 subfamily. As to quaternary structure, homotetramer.

The enzyme catalyses IMP + NH4(+) + NADP(+) = GMP + NADPH + 2 H(+). Catalyzes the irreversible NADPH-dependent deamination of GMP to IMP. It functions in the conversion of nucleobase, nucleoside and nucleotide derivatives of G to A nucleotides, and in maintaining the intracellular balance of A and G nucleotides. In Salmonella typhi, this protein is GMP reductase.